The sequence spans 420 residues: Heterogeneous nuclear ribonucleoprotein D-like (420 aa).

2 disordered regions span residues 1 to 83 and 96 to 120; these read MEVP…RRRP and QRSA…SVTM. Position 25 is an omega-N-methylarginine (Arg25). Over residues 36–52 the composition is skewed to low complexity; sequence RQLAPLLPSLAPSSARQ. 2 RRM domains span residues 148–230 and 233–312; these read GKMF…KGKE and KKVF…QPKE. The residue at position 161 (Lys161) is an N6-methyllysine. A Glycyl lysine isopeptide (Lys-Gly) (interchain with G-Cter in SUMO2) cross-link involves residue Lys209. The residue at position 216 (Lys216) is an N6-acetyllysine. Ser241 carries the post-translational modification Phosphoserine. 2 disordered regions span residues 313-348 and 398-420; these read VYRQ…NWNQ and GQQS…YQPY. Positions 323–342 are enriched in gly residues; sequence GGRGAAAGGRGGTRGRGRGQ. Residues 342–420 are necessary for interaction with TNPO1; sequence QGQNWNQGFN…GNHQNNYQPY (79 aa). A necessary for its nuclear import and export region spans residues 396-420; it reads YSGQQSTYGKASRGGGNHQNNYQPY. Arg408 carries the post-translational modification Dimethylated arginine; alternate. Arg408 bears the Omega-N-methylarginine; alternate mark.

As to quaternary structure, interacts with ZNF148. Interacts with TNPO1. Dimethylation of Arg-408 is probably of the asymmetric type. As to expression, expressed in heart, brain, placenta, lung, liver, skeletal muscle, kidney, pancreas, spleen, thymus, prostate, testis, ovary, small intestine, colon and leukocytes. Expressed in myeloid leukemia, gastric adenocarcinoma, cervical carcinoma, hepatoma, fibrosarcoma, colon adenocarcinoma, epidermoid carcinoma, osteosarcoma and urinary bladder carcinoma cells.

The protein resides in the nucleus. The protein localises to the cytoplasm. Functionally, acts as a transcriptional regulator. Promotes transcription repression. Promotes transcription activation in differentiated myotubes. Binds to double- and single-stranded DNA sequences. Binds to the transcription suppressor CATR sequence of the COX5B promoter. Binds with high affinity to RNA molecules that contain AU-rich elements (AREs) found within the 3'-UTR of many proto-oncogenes and cytokine mRNAs. Binds both to nuclear and cytoplasmic poly(A) mRNAs. Binds to poly(G) and poly(A), but not to poly(U) or poly(C) RNA homopolymers. Binds to the 5'-ACUAGC-3' RNA consensus sequence. The polypeptide is Heterogeneous nuclear ribonucleoprotein D-like (HNRNPDL) (Homo sapiens (Human)).